The following is a 197-amino-acid chain: C-type lectin domain family 3 member A (197 aa).

An N-terminal signal peptide occupies residues 1-22; that stretch reads MAKNGLVICILVITLLLDQTTS. Disulfide bonds link Cys-68-Cys-78, Cys-95-Cys-191, and Cys-167-Cys-183. Residues 74-192 form the C-type lectin domain; it reads VHKKCYLASE…CRSSKRYICE (119 aa).

Restricted to cartilage and breast. Also expressed in breast cancers.

The protein resides in the secreted. In terms of biological role, promotes cell adhesion to laminin-332 and fibronectin. This Homo sapiens (Human) protein is C-type lectin domain family 3 member A (CLEC3A).